Here is a 370-residue protein sequence, read N- to C-terminus: MRADTADYPQLFLEDVPMMDTRAPVEFAGGAFPNVLNLPLMTDSERQKVGTCYKQHGQRAAIELGHRLVSGRTKELRIQAWADFARAHPEGYLYCFRGGLRSQIVQQWLRDEAGIDYPRVTGGYKAMRNFLLDTTRQATAQCAFVLVGGLTGTGKTEVIAALGNALDLEGHANHRGSSFGKRATPQPAQIDFENRLAIDILRKRAAGVGRFVLEDESRLVGSCSLPLELHQGMQRYPLVWLEDSFEGRVERILRDYVVDLCAEFVAVEGPQAGFAAFAARLTQSLANIVKRLGGERYQRLSTLMARALAEQEAGRGVALHRDWIVGLLREYYDPMYAYQRESKAERIVFSGDREAVLAYLRECAAGAVDG.

Positions 12–136 (FLEDVPMMDT…MRNFLLDTTR (125 aa)) constitute a Rhodanese domain. The active-site S-selanylcysteine intermediate is the C95.

The protein belongs to the SelU family. Monomer.

It catalyses the reaction 5-methylaminomethyl-2-thiouridine(34) in tRNA + selenophosphate + (2E)-geranyl diphosphate + H2O + H(+) = 5-methylaminomethyl-2-selenouridine(34) in tRNA + (2E)-thiogeraniol + phosphate + diphosphate. The enzyme catalyses 5-methylaminomethyl-2-thiouridine(34) in tRNA + (2E)-geranyl diphosphate = 5-methylaminomethyl-S-(2E)-geranyl-thiouridine(34) in tRNA + diphosphate. It carries out the reaction 5-methylaminomethyl-S-(2E)-geranyl-thiouridine(34) in tRNA + selenophosphate + H(+) = 5-methylaminomethyl-2-(Se-phospho)selenouridine(34) in tRNA + (2E)-thiogeraniol. The catalysed reaction is 5-methylaminomethyl-2-(Se-phospho)selenouridine(34) in tRNA + H2O = 5-methylaminomethyl-2-selenouridine(34) in tRNA + phosphate. Involved in the post-transcriptional modification of the uridine at the wobble position (U34) of tRNA(Lys), tRNA(Glu) and tRNA(Gln). Catalyzes the conversion of 2-thiouridine (S2U-RNA) to 2-selenouridine (Se2U-RNA). Acts in a two-step process involving geranylation of 2-thiouridine (S2U) to S-geranyl-2-thiouridine (geS2U) and subsequent selenation of the latter derivative to 2-selenouridine (Se2U) in the tRNA chain. The protein is tRNA 2-selenouridine synthase of Azotobacter vinelandii (strain DJ / ATCC BAA-1303).